The chain runs to 181 residues: Protein GrpE (181 aa).

The disordered stretch occupies residues 1–21 (MNKEQQDLQTEQEAAVETAEL). Positions 8-21 (LQTEQEAAVETAEL) are enriched in low complexity.

It belongs to the GrpE family. Homodimer.

It is found in the cytoplasm. Functionally, participates actively in the response to hyperosmotic and heat shock by preventing the aggregation of stress-denatured proteins, in association with DnaK and GrpE. It is the nucleotide exchange factor for DnaK and may function as a thermosensor. Unfolded proteins bind initially to DnaJ; upon interaction with the DnaJ-bound protein, DnaK hydrolyzes its bound ATP, resulting in the formation of a stable complex. GrpE releases ADP from DnaK; ATP binding to DnaK triggers the release of the substrate protein, thus completing the reaction cycle. Several rounds of ATP-dependent interactions between DnaJ, DnaK and GrpE are required for fully efficient folding. The protein is Protein GrpE of Trichlorobacter lovleyi (strain ATCC BAA-1151 / DSM 17278 / SZ) (Geobacter lovleyi).